Reading from the N-terminus, the 221-residue chain is GTP-binding nuclear protein Ran-B1 (221 aa).

The 165-residue stretch at 10–174 folds into the Small GTPase Ran-type domain; it reads DYPSFKLVIV…LYLARKLAGD (165 aa). 21–28 is a binding site for GTP; it reads DGGTGKTT. The tract at residues 40 to 48 is switch-I; the sequence is KKYEPTIGV. GTP-binding positions include G71, 125-128, and 153-155; these read NKVD and SAK. Residues 71-87 are switch-II; sequence GQEKFGGLRDGYYIHGQ.

This sequence belongs to the small GTPase superfamily. Ran family. Found in a nuclear export complex with RanGTP, exportin and pre-miRNA.

The protein resides in the nucleus. In terms of biological role, GTP-binding protein involved in nucleocytoplasmic transport. Required for the import of protein into the nucleus and also for RNA export. Involved in chromatin condensation and control of cell cycle. In Nicotiana tabacum (Common tobacco), this protein is GTP-binding nuclear protein Ran-B1 (RAN-B1).